The sequence spans 222 residues: Ras-related protein Rab-41 (222 aa).

GTP is bound by residues S41, V42, G43, K44, T45, S46, and T63. T45 lines the Mg(2+) pocket. A switch-I region spans residues 58 to 66 (CACQATVGI). The Mg(2+) site is built by T63 and D86. G89, N144, K145, D147, S174, A175, and K176 together coordinate GTP. A switch-II region spans residues 89 to 105 (GQERFHSLIPSYIRDST). C222 carries S-geranylgeranyl cysteine lipidation.

The protein belongs to the small GTPase superfamily. Rab family. The cofactor is Mg(2+). Widely expressed in brain, testis, lung, heart, ovary, colon, kidney, uterus and spleen but not in liver.

The protein resides in the cytoplasm. It catalyses the reaction GTP + H2O = GDP + phosphate + H(+). With respect to regulation, regulated by guanine nucleotide exchange factors (GEFs) which promote the exchange of bound GDP for free GTP. Regulated by GTPase activating proteins (GAPs) which increase the GTP hydrolysis activity. Inhibited by GDP dissociation inhibitors (GDIs). Functionally, the small GTPases Rab are key regulators of intracellular membrane trafficking, from the formation of transport vesicles to their fusion with membranes. Rabs cycle between an inactive GDP-bound form and an active GTP-bound form that is able to recruit to membranes different sets of downstream effectors directly responsible for vesicle formation, movement, tethering and fusion. RAB41 is required for normal Golgi ribbon organization and ER-to-Golgi trafficking. The protein is Ras-related protein Rab-41 of Homo sapiens (Human).